We begin with the raw amino-acid sequence, 330 residues long: Tryptophan--tRNA ligase (330 aa).

ATP contacts are provided by residues 10-12 (QAT) and 18-19 (GN). The short motif at 11-19 (ATGSLHLGN) is the 'HIGH' region element. L-tryptophan is bound at residue Asp134. ATP is bound by residues 146–148 (GED), Ile186, and 195–199 (KMSKS). Residues 195-199 (KMSKS) carry the 'KMSKS' region motif.

This sequence belongs to the class-I aminoacyl-tRNA synthetase family. As to quaternary structure, homodimer.

The protein localises to the cytoplasm. It catalyses the reaction tRNA(Trp) + L-tryptophan + ATP = L-tryptophyl-tRNA(Trp) + AMP + diphosphate + H(+). In terms of biological role, catalyzes the attachment of tryptophan to tRNA(Trp). The chain is Tryptophan--tRNA ligase from Rickettsia conorii (strain ATCC VR-613 / Malish 7).